The sequence spans 245 residues: Biosynthetic peptidoglycan transglycosylase (245 aa).

The helical transmembrane segment at 13-35 (VGLARWIVYAGSVFAGAWLATQL) threads the bilayer.

This sequence belongs to the glycosyltransferase 51 family.

Its subcellular location is the cell inner membrane. The enzyme catalyses [GlcNAc-(1-&gt;4)-Mur2Ac(oyl-L-Ala-gamma-D-Glu-L-Lys-D-Ala-D-Ala)](n)-di-trans,octa-cis-undecaprenyl diphosphate + beta-D-GlcNAc-(1-&gt;4)-Mur2Ac(oyl-L-Ala-gamma-D-Glu-L-Lys-D-Ala-D-Ala)-di-trans,octa-cis-undecaprenyl diphosphate = [GlcNAc-(1-&gt;4)-Mur2Ac(oyl-L-Ala-gamma-D-Glu-L-Lys-D-Ala-D-Ala)](n+1)-di-trans,octa-cis-undecaprenyl diphosphate + di-trans,octa-cis-undecaprenyl diphosphate + H(+). It participates in cell wall biogenesis; peptidoglycan biosynthesis. Its function is as follows. Peptidoglycan polymerase that catalyzes glycan chain elongation from lipid-linked precursors. The sequence is that of Biosynthetic peptidoglycan transglycosylase from Burkholderia vietnamiensis (strain G4 / LMG 22486) (Burkholderia cepacia (strain R1808)).